The primary structure comprises 199 residues: dITP/XTP pyrophosphatase (199 aa).

7-12 (SNNPGK) is a binding site for substrate. Asp68 functions as the Proton acceptor in the catalytic mechanism. Mg(2+) is bound at residue Asp68. Substrate-binding positions include Ala69, 154-157 (FGFD), Lys177, and 182-183 (HR).

The protein belongs to the HAM1 NTPase family. In terms of assembly, homodimer. Mg(2+) serves as cofactor.

The enzyme catalyses XTP + H2O = XMP + diphosphate + H(+). It catalyses the reaction dITP + H2O = dIMP + diphosphate + H(+). The catalysed reaction is ITP + H2O = IMP + diphosphate + H(+). In terms of biological role, pyrophosphatase that catalyzes the hydrolysis of nucleoside triphosphates to their monophosphate derivatives, with a high preference for the non-canonical purine nucleotides XTP (xanthosine triphosphate), dITP (deoxyinosine triphosphate) and ITP. Seems to function as a house-cleaning enzyme that removes non-canonical purine nucleotides from the nucleotide pool, thus preventing their incorporation into DNA/RNA and avoiding chromosomal lesions. This is dITP/XTP pyrophosphatase from Verminephrobacter eiseniae (strain EF01-2).